The chain runs to 351 residues: sn-1 oleoyl-lipid 12-desaturase (351 aa).

The segment at 1-20 is disordered; it reads MTLSIVKSEDSSSRPSAVPS. A run of 2 helical transmembrane segments spans residues 44–62 and 68–88; these read AWMTVIINVVMVGLGWLGI and FLLPVVWVFTGTALTGFFVIG. The short motif at 89–93 is the Histidine box-1 element; the sequence is HDCGH. A helical transmembrane segment spans residues 100–120; it reads VWVNDWVGHILFLPIIYPFHS. Residues 125–129 carry the Histidine box-2 motif; it reads HNQHH. 2 helical membrane passes run 199–219 and 221–241; these read LLVIGAAAIAFPTMILTIGVW and FVKFWVIPWLVFHFWMSTFTL. The short motif at 289–293 is the Histidine box-3 element; that stretch reads HHVTT.

Belongs to the fatty acid desaturase type 2 family. Fe(2+) is required as a cofactor.

The protein localises to the cellular thylakoid membrane. The catalysed reaction is a 1-[(9Z)-octadecenoyl]-2-acyl-glycerolipid + 2 reduced [2Fe-2S]-[ferredoxin] + O2 + 2 H(+) = a 1-[(9Z,12Z)-octadecdienoyl]-2-acyl-glycerolipid + 2 oxidized [2Fe-2S]-[ferredoxin] + 2 H2O. The protein operates within lipid metabolism; polyunsaturated fatty acid biosynthesis. Its function is as follows. Desaturase involved in fatty acid biosynthesis. Introduces a double bond at carbon 12 of oleoyl groups (18:1) attached to the sn-1 position of the glycerol moiety of membrane glycerolipids. The sequence is that of sn-1 oleoyl-lipid 12-desaturase from Arthrospira platensis (Spirulina platensis).